The following is a 332-amino-acid chain: 4-hydroxy-3-methylbut-2-enyl diphosphate reductase (332 aa).

Cys-34 contributes to the [4Fe-4S] cluster binding site. 2 residues coordinate (2E)-4-hydroxy-3-methylbut-2-enyl diphosphate: His-63 and His-96. The dimethylallyl diphosphate site is built by His-63 and His-96. Isopentenyl diphosphate is bound by residues His-63 and His-96. Residue Cys-118 coordinates [4Fe-4S] cluster. His-146 provides a ligand contact to (2E)-4-hydroxy-3-methylbut-2-enyl diphosphate. His-146 lines the dimethylallyl diphosphate pocket. His-146 provides a ligand contact to isopentenyl diphosphate. Glu-148 acts as the Proton donor in catalysis. Residue Thr-186 participates in (2E)-4-hydroxy-3-methylbut-2-enyl diphosphate binding. Cys-216 is a binding site for [4Fe-4S] cluster. 4 residues coordinate (2E)-4-hydroxy-3-methylbut-2-enyl diphosphate: Ser-244, Ser-245, Asn-246, and Ser-289. Residues Ser-244, Ser-245, Asn-246, and Ser-289 each contribute to the dimethylallyl diphosphate site. Positions 244, 245, 246, and 289 each coordinate isopentenyl diphosphate.

The protein belongs to the IspH family. [4Fe-4S] cluster serves as cofactor.

It carries out the reaction isopentenyl diphosphate + 2 oxidized [2Fe-2S]-[ferredoxin] + H2O = (2E)-4-hydroxy-3-methylbut-2-enyl diphosphate + 2 reduced [2Fe-2S]-[ferredoxin] + 2 H(+). It catalyses the reaction dimethylallyl diphosphate + 2 oxidized [2Fe-2S]-[ferredoxin] + H2O = (2E)-4-hydroxy-3-methylbut-2-enyl diphosphate + 2 reduced [2Fe-2S]-[ferredoxin] + 2 H(+). It functions in the pathway isoprenoid biosynthesis; dimethylallyl diphosphate biosynthesis; dimethylallyl diphosphate from (2E)-4-hydroxy-3-methylbutenyl diphosphate: step 1/1. Its pathway is isoprenoid biosynthesis; isopentenyl diphosphate biosynthesis via DXP pathway; isopentenyl diphosphate from 1-deoxy-D-xylulose 5-phosphate: step 6/6. Its function is as follows. Catalyzes the conversion of 1-hydroxy-2-methyl-2-(E)-butenyl 4-diphosphate (HMBPP) into a mixture of isopentenyl diphosphate (IPP) and dimethylallyl diphosphate (DMAPP). Acts in the terminal step of the DOXP/MEP pathway for isoprenoid precursor biosynthesis. The polypeptide is 4-hydroxy-3-methylbut-2-enyl diphosphate reductase (Mycobacterium ulcerans (strain Agy99)).